A 351-amino-acid polypeptide reads, in one-letter code: D-alanine--D-alanine ligase (351 aa).

The ATP-grasp domain occupies 146 to 340 (KEIMLYNNIK…YEDLCESIVL (195 aa)). 173-226 (AFDYPMVVKPNSGGSSIGTRIVHDEAELAESLKDAYRFDDEIIVEEFITGREFS) is a binding site for ATP. 3 residues coordinate Mg(2+): Asp-295, Glu-307, and Asn-309.

This sequence belongs to the D-alanine--D-alanine ligase family. Mg(2+) is required as a cofactor. The cofactor is Mn(2+).

It is found in the cytoplasm. The enzyme catalyses 2 D-alanine + ATP = D-alanyl-D-alanine + ADP + phosphate + H(+). It participates in cell wall biogenesis; peptidoglycan biosynthesis. In terms of biological role, cell wall formation. The protein is D-alanine--D-alanine ligase of Pediococcus pentosaceus (strain ATCC 25745 / CCUG 21536 / LMG 10740 / 183-1w).